The following is a 252-amino-acid chain: Geranylgeranylglyceryl phosphate synthase (252 aa).

Residues Asp-25 and Ser-54 each contribute to the Mg(2+) site. Sn-glycerol 1-phosphate-binding positions include Phe-174–Gly-180, Gly-205–Gly-206, and Gly-227–Asn-228.

It belongs to the GGGP/HepGP synthase family. Group II subfamily. As to quaternary structure, homohexamer. The cofactor is Mg(2+).

The catalysed reaction is sn-glycerol 1-phosphate + (2E,6E,10E)-geranylgeranyl diphosphate = sn-3-O-(geranylgeranyl)glycerol 1-phosphate + diphosphate. Prenyltransferase that catalyzes the transfer of the geranylgeranyl moiety of geranylgeranyl diphosphate (GGPP) to the C3 hydroxyl of sn-glycerol-1-phosphate (G1P). The polypeptide is Geranylgeranylglyceryl phosphate synthase (Chitinophaga pinensis (strain ATCC 43595 / DSM 2588 / LMG 13176 / NBRC 15968 / NCIMB 11800 / UQM 2034)).